Reading from the N-terminus, the 364-residue chain is Lipoyl synthase, chloroplastic (364 aa).

Residues 1–70 (MEQTLFNPSI…PNVKKPEWLR (70 aa)) constitute a chloroplast transit peptide. Low complexity predominate over residues 32-52 (STNSPSSNTKTTTVTVPSKKT). Residues 32–64 (STNSPSSNTKTTTVTVPSKKTMGPYTGRDPNVK) are disordered. Residues C95, C100, C106, C126, C130, C133, and S341 each coordinate [4Fe-4S] cluster. Positions 109 to 330 (GGGDGIATAT…KEYGESIGFR (222 aa)) constitute a Radical SAM core domain.

The protein belongs to the radical SAM superfamily. Lipoyl synthase family. [4Fe-4S] cluster serves as cofactor.

It is found in the plastid. The protein localises to the chloroplast. The catalysed reaction is [[Fe-S] cluster scaffold protein carrying a second [4Fe-4S](2+) cluster] + N(6)-octanoyl-L-lysyl-[protein] + 2 oxidized [2Fe-2S]-[ferredoxin] + 2 S-adenosyl-L-methionine + 4 H(+) = [[Fe-S] cluster scaffold protein] + N(6)-[(R)-dihydrolipoyl]-L-lysyl-[protein] + 4 Fe(3+) + 2 hydrogen sulfide + 2 5'-deoxyadenosine + 2 L-methionine + 2 reduced [2Fe-2S]-[ferredoxin]. Its pathway is protein modification; protein lipoylation via endogenous pathway; protein N(6)-(lipoyl)lysine from octanoyl-[acyl-carrier-protein]: step 2/2. In terms of biological role, catalyzes the radical-mediated insertion of two sulfur atoms into the C-6 and C-8 positions of the octanoyl moiety bound to the lipoyl domains of lipoate-dependent enzymes, thereby converting the octanoylated domains into lipoylated derivatives. The polypeptide is Lipoyl synthase, chloroplastic (Ricinus communis (Castor bean)).